Here is a 382-residue protein sequence, read N- to C-terminus: Dual-specificity RNA methyltransferase RlmN (382 aa).

Glu96 acts as the Proton acceptor in catalysis. A Radical SAM core domain is found at 102–342; it reads QGKRGTLCVS…VRTTRGEDID (241 aa). The cysteines at positions 109 and 345 are disulfide-linked. 3 residues coordinate [4Fe-4S] cluster: Cys116, Cys120, and Cys123. Residues 170–171, Ser202, 224–226, and Asn302 each bind S-adenosyl-L-methionine; these read GE and SLH. Catalysis depends on Cys345, which acts as the S-methylcysteine intermediate.

This sequence belongs to the radical SAM superfamily. RlmN family. [4Fe-4S] cluster serves as cofactor.

The protein resides in the cytoplasm. It carries out the reaction adenosine(2503) in 23S rRNA + 2 reduced [2Fe-2S]-[ferredoxin] + 2 S-adenosyl-L-methionine = 2-methyladenosine(2503) in 23S rRNA + 5'-deoxyadenosine + L-methionine + 2 oxidized [2Fe-2S]-[ferredoxin] + S-adenosyl-L-homocysteine. The enzyme catalyses adenosine(37) in tRNA + 2 reduced [2Fe-2S]-[ferredoxin] + 2 S-adenosyl-L-methionine = 2-methyladenosine(37) in tRNA + 5'-deoxyadenosine + L-methionine + 2 oxidized [2Fe-2S]-[ferredoxin] + S-adenosyl-L-homocysteine. In terms of biological role, specifically methylates position 2 of adenine 2503 in 23S rRNA and position 2 of adenine 37 in tRNAs. m2A2503 modification seems to play a crucial role in the proofreading step occurring at the peptidyl transferase center and thus would serve to optimize ribosomal fidelity. The chain is Dual-specificity RNA methyltransferase RlmN from Pseudomonas savastanoi pv. phaseolicola (strain 1448A / Race 6) (Pseudomonas syringae pv. phaseolicola (strain 1448A / Race 6)).